Here is a 160-residue protein sequence, read N- to C-terminus: Serine-protein kinase RsbW (160 aa).

Belongs to the anti-sigma-factor family.

The enzyme catalyses L-seryl-[protein] + ATP = O-phospho-L-seryl-[protein] + ADP + H(+). It carries out the reaction L-threonyl-[protein] + ATP = O-phospho-L-threonyl-[protein] + ADP + H(+). Functionally, negative regulator of sigma-B activity. Phosphorylates and inactivates its specific antagonist protein, RsbV. Upon phosphorylation of RsbV, RsbW is released and binds to sigma-B, thereby blocking its ability to form an RNA polymerase holoenzyme (E-sigma-B). The chain is Serine-protein kinase RsbW from Bacillus anthracis (strain A0248).